We begin with the raw amino-acid sequence, 354 residues long: NADH-quinone oxidoreductase subunit H (354 aa).

8 helical membrane-spanning segments follow: residues 16-36 (WLAV…PVMI), 90-110 (YLFI…WAVI), 126-146 (VLYV…SGWA), 170-190 (MGFA…TGIV), 197-217 (IWNW…ISGL), 249-269 (VFFL…AIMF), 290-310 (VPGF…FLWF), and 329-349 (VLIP…YFKV).

It belongs to the complex I subunit 1 family. NDH-1 is composed of 14 different subunits. Subunits NuoA, H, J, K, L, M, N constitute the membrane sector of the complex.

Its subcellular location is the cell inner membrane. The enzyme catalyses a quinone + NADH + 5 H(+)(in) = a quinol + NAD(+) + 4 H(+)(out). NDH-1 shuttles electrons from NADH, via FMN and iron-sulfur (Fe-S) centers, to quinones in the respiratory chain. The immediate electron acceptor for the enzyme in this species is believed to be ubiquinone. Couples the redox reaction to proton translocation (for every two electrons transferred, four hydrogen ions are translocated across the cytoplasmic membrane), and thus conserves the redox energy in a proton gradient. This subunit may bind ubiquinone. The sequence is that of NADH-quinone oxidoreductase subunit H from Hydrogenovibrio crunogenus (strain DSM 25203 / XCL-2) (Thiomicrospira crunogena).